A 345-amino-acid chain; its full sequence is Platelet-derived growth factor C (345 aa).

Positions 1–22 are cleaved as a signal peptide; that stretch reads MLLLGLLLLTSALAGQRTGTRA. The span at 24-33 shows a compositional bias: polar residues; the sequence is SNLSSKLQLS. The interval 24 to 45 is disordered; the sequence is SNLSSKLQLSSDKEQNGVQDPR. An N-linked (GlcNAc...) asparagine glycan is attached at asparagine 25. Residues 34 to 45 show a composition bias toward basic and acidic residues; sequence SDKEQNGVQDPR. Residues 46 to 163 enclose the CUB domain; the sequence is HERVVTISGN…PGFCIHYSII (118 aa). N-linked (GlcNAc...) asparagine glycosylation is present at asparagine 55. 4 disulfide bridges follow: cysteine 104/cysteine 124, cysteine 250/cysteine 294, cysteine 280/cysteine 335, and cysteine 287/cysteine 337.

The protein belongs to the PDGF/VEGF growth factor family. As to quaternary structure, homodimer; disulfide-linked. Interacts with PDGFRA homodimers, and with heterodimers formed by PDGFRA and PDGFRB. Interacts (via CUB domain) with PLAT (via kringle domain). Post-translationally, proteolytic removal of the N-terminal CUB domain releasing the core domain is necessary for unmasking the receptor-binding epitopes of the core domain. Cleavage after basic residues in the hinge region (region connecting the CUB and growth factor domains) gives rise to the receptor-binding form. Cleaved by PLAT and PLG. Sumoylated by SUMO1. In terms of processing, N-glycosylated. As to expression, mainly expressed in kidney, testis, liver, heart and brain (at protein level). Highly expressed in airway epithelium, interstitial cells and alveolar macrophages in the lung of mice overexpressing IL13. Expressed in the ovaries.

The protein localises to the cytoplasm. Its subcellular location is the cytosol. It localises to the secreted. The protein resides in the nucleus. It is found in the cytoplasmic granule. The protein localises to the cell membrane. In terms of biological role, growth factor that plays an essential role in the regulation of embryonic development, cell proliferation, cell migration, survival and chemotaxis. Potent mitogen and chemoattractant for cells of mesenchymal origin. Required for normal skeleton formation during embryonic development, especially for normal development of the craniofacial skeleton and for normal development of the palate. Required for normal skin morphogenesis during embryonic development. Plays an important role in wound healing, where it appears to be involved in three stages: inflammation, proliferation and remodeling. Plays an important role in angiogenesis and blood vessel development. Involved in fibrotic processes, in which transformation of interstitial fibroblasts into myofibroblasts plus collagen deposition occurs. The CUB domain has mitogenic activity in coronary artery smooth muscle cells, suggesting a role beyond the maintenance of the latency of the PDGF domain. In the nucleus, PDGFC seems to have additional function. The polypeptide is Platelet-derived growth factor C (Pdgfc) (Mus musculus (Mouse)).